The primary structure comprises 145 residues: Transcription antitermination protein NusB (145 aa).

Belongs to the NusB family.

Its function is as follows. Involved in transcription antitermination. Required for transcription of ribosomal RNA (rRNA) genes. Binds specifically to the boxA antiterminator sequence of the ribosomal RNA (rrn) operons. This is Transcription antitermination protein NusB from Citrifermentans bemidjiense (strain ATCC BAA-1014 / DSM 16622 / JCM 12645 / Bem) (Geobacter bemidjiensis).